Here is a 153-residue protein sequence, read N- to C-terminus: Ribosomal RNA large subunit methyltransferase H (153 aa).

Residues L71 and G102 each contribute to the S-adenosyl-L-methionine site.

This sequence belongs to the RNA methyltransferase RlmH family. As to quaternary structure, homodimer.

The protein localises to the cytoplasm. The catalysed reaction is pseudouridine(1915) in 23S rRNA + S-adenosyl-L-methionine = N(3)-methylpseudouridine(1915) in 23S rRNA + S-adenosyl-L-homocysteine + H(+). Functionally, specifically methylates the pseudouridine at position 1915 (m3Psi1915) in 23S rRNA. The sequence is that of Ribosomal RNA large subunit methyltransferase H from Anaeromyxobacter dehalogenans (strain 2CP-1 / ATCC BAA-258).